Here is a 780-residue protein sequence, read N- to C-terminus: Potassium/sodium hyperpolarization-activated cyclic nucleotide-gated channel 3 (780 aa).

Residues 1-47 form a disordered region; it reads MEEEARPAVGDGEAATPARETPPAAPAQARAASGGVPESAPEPKRRQ. The Cytoplasmic segment spans residues 1-96; that stretch reads MEEEARPAVG…PYSDFRFYWD (96 aa). Low complexity predominate over residues 13–32; that stretch reads EAATPARETPPAAPAQARAA. Residues 45 to 90 form an involved in subunit assembly region; that stretch reads RRQLGTLLQPTVNKFSLRVFGSHKAVEIEQERVKSAGAWIIHPYSD. Residues 97–117 form a helical membrane-spanning segment; sequence LIMLLLMVGNLIVLPVGITFF. The Extracellular portion of the chain corresponds to 118 to 123; that stretch reads KEENSP. The helical transmembrane segment at 124 to 144 threads the bilayer; sequence PWIVFNVLSDTFFLLDLVLNF. At 145–170 the chain is on the cytoplasmic side; sequence RTGIVVEEGAEILLAPRAIRTRYLRT. A helical transmembrane segment spans residues 171–191; it reads WFLVDLISSIPVDYIFLVVEL. The Extracellular segment spans residues 192-200; the sequence is EPRLDAEVY. Residues 201–221 form a helical; Voltage-sensor membrane-spanning segment; sequence KTARALRIVRFTKILSLLRLL. The Cytoplasmic segment spans residues 222–252; it reads RLSRLIRYMHQWEEIFHMTYDLASAVVRIFN. The helical transmembrane segment at 253–273 threads the bilayer; that stretch reads LIGMMLLLCHWDGCLQFLVPM. Topologically, residues 274 to 296 are extracellular; that stretch reads LQDFPSDCWVSMNRMVNHSWGRQ. N-linked (GlcNAc...) asparagine glycosylation occurs at Asn290. An intramembrane region (pore-forming) is located at residues 297-318; it reads YSHALFKAMSHMLCIGYGQQAP. Residues 319 to 328 lie on the Extracellular side of the membrane; that stretch reads VGMPDVWLTM. Residues 329–349 traverse the membrane as a helical segment; sequence LSMIVGATCYAMFIGHATALI. Residues 350 to 780 are Cytoplasmic-facing; sequence QSLDSSRRQY…PRGPQISANM (431 aa). The interval 353-780 is interaction with KCTD3; it reads DSSRRQYQEK…PRGPQISANM (428 aa). The 3',5'-cyclic AMP site is built by Gly491, Glu492, Cys494, Arg501, Thr502, Arg542, and Arg545. Residues 549–569 form a disordered region; sequence KNSILQRKRSEPSPGSSSGGV. Ser634 bears the Phosphoserine mark. A compositionally biased stretch (polar residues) spans 687-698; it reads ASLSRTGRSQVS. The interval 687–780 is disordered; sequence ASLSRTGRSQ…PRGPQISANM (94 aa).

This sequence belongs to the potassium channel HCN family. Homotetramer. The potassium channel is composed of a homo- or heterotetrameric complex of pore-forming subunits. Interacts with HCN1. Interacts with KCTD3; this interaction increases cell surface expression and current density of this channel. Interacts with PEX5L.

The protein localises to the cell membrane. It carries out the reaction K(+)(in) = K(+)(out). The enzyme catalyses Na(+)(in) = Na(+)(out). Inhibited by Cs(1+) and ivabradine. Unlike HCN2 and HCN4, HCN3 is insensitive to cyclic nucleotides, such as cAMP or cGMP. This lack of sensitivity of HCN3, despite harboring a functional cyclic nucleotide-binding domain (CNBD), may be explained by its shorter C-terminal sequence, which may alter the normal autoinhibition of the channel. Phosphatidylinositol-4,5-bisphosphate (PIP(2)) shifts HCN3 activation to more depolarized potentials and accelerated activation kinetics. Hyperpolarization-activated ion channel that are permeable to sodium and potassium ions, with an about 3:1 preference for potassium ions. Contributes to the native pacemaker currents in heart (If) and in neurons (Ih). In particular, plays a pivotal role in maintaining excitability and promoting rhythmic burst firing within hypothalamic nuclei. Exerts a significant influence on the configuration of the cardiac action potential waveform. Does not appear to play a prominent role in the processing of acute, neuropathic, or inflammatory pain. This Rattus norvegicus (Rat) protein is Potassium/sodium hyperpolarization-activated cyclic nucleotide-gated channel 3 (Hcn3).